The primary structure comprises 96 residues: MMVQVPIFDLLKLLDVLGIDSISFRVLNEYDEGFIRVDYLEEALQKDGWSKVYNESEDPNYCCGNFDVEYANNGYKIILRCDEDGYVFQITINKVT.

Its function is as follows. Essential for virus function. This is an uncharacterized protein from Saccharolobus solfataricus (Sulfolobus solfataricus).